The primary structure comprises 338 residues: DNA-directed RNA polymerase subunit alpha (338 aa).

The alpha N-terminal domain (alpha-NTD) stretch occupies residues M1–N225. Residues T240–E338 form an alpha C-terminal domain (alpha-CTD) region. The segment at L319–E338 is disordered.

The protein belongs to the RNA polymerase alpha chain family. Homodimer. The RNAP catalytic core consists of 2 alpha, 1 beta, 1 beta' and 1 omega subunit. When a sigma factor is associated with the core the holoenzyme is formed, which can initiate transcription.

The catalysed reaction is RNA(n) + a ribonucleoside 5'-triphosphate = RNA(n+1) + diphosphate. DNA-dependent RNA polymerase catalyzes the transcription of DNA into RNA using the four ribonucleoside triphosphates as substrates. In Corynebacterium glutamicum (strain R), this protein is DNA-directed RNA polymerase subunit alpha.